The chain runs to 87 residues: U3-theraphotoxin-Hhn1l (87 aa).

A signal peptide spans methionine 1 to alanine 24. A propeptide spanning residues serine 25–arginine 52 is cleaved from the precursor. Disulfide bonds link cysteine 54-cysteine 67, cysteine 61-cysteine 72, and cysteine 66-cysteine 79.

It belongs to the neurotoxin 10 (Hwtx-1) family. 51 (Hntx-8) subfamily. Hntx-8 sub-subfamily. As to expression, expressed by the venom gland.

It is found in the secreted. In terms of biological role, ion channel inhibitor. The chain is U3-theraphotoxin-Hhn1l from Cyriopagopus hainanus (Chinese bird spider).